The chain runs to 680 residues: Structure-specific endonuclease subunit SLX4 (680 aa).

Disordered regions lie at residues 15–92, 141–183, and 450–490; these read EVAK…EPVV, ESSS…STQQ, and LGSG…ATRL. Positions 22-33 are enriched in acidic residues; sequence DSDEPIIDEDDL. Basic and acidic residues predominate over residues 60 to 86; that stretch reads NNSKDTFKETPLELVDKEEAIEDKAPN. Residues 156–174 show a composition bias toward basic residues; it reads LKSKKITKPKLTKTSKRTK. Polar residues predominate over residues 473-490; it reads TVISRSPQSTRTPQATRL.

Belongs to the SLX4 family. In terms of assembly, forms a heterodimer with SLX1. Post-translationally, phosphorylated in response to DNA damage.

Its subcellular location is the nucleus. Its function is as follows. Regulatory subunit of the SLX1-SLX4 structure-specific endonuclease that resolves DNA secondary structures generated during DNA repair and recombination. Has endonuclease activity towards branched DNA substrates, introducing single-strand cuts in duplex DNA close to junctions with ss-DNA. This chain is Structure-specific endonuclease subunit SLX4, found in Vanderwaltozyma polyspora (strain ATCC 22028 / DSM 70294 / BCRC 21397 / CBS 2163 / NBRC 10782 / NRRL Y-8283 / UCD 57-17) (Kluyveromyces polysporus).